A 108-amino-acid polypeptide reads, in one-letter code: ATP-dependent Clp protease adapter protein ClpS (108 aa).

Over residues 1–15 (MPRESSPDSHHEHGV) the composition is skewed to basic and acidic residues. The interval 1–24 (MPRESSPDSHHEHGVAVEPARPEV) is disordered.

The protein belongs to the ClpS family. In terms of assembly, binds to the N-terminal domain of the chaperone ClpA.

Its function is as follows. Involved in the modulation of the specificity of the ClpAP-mediated ATP-dependent protein degradation. This is ATP-dependent Clp protease adapter protein ClpS from Stenotrophomonas maltophilia (strain R551-3).